Here is a 124-residue protein sequence, read N- to C-terminus: Fluoride-specific ion channel FluC (124 aa).

The next 4 helical transmembrane spans lie at 6–26 (FAVACGGVIGTLLRFALATWV), 34–54 (FYLATVAVNLLGCLLIGYLYA), 69–89 (ALIIGFLGALTTFSSFSLDAL), and 101–121 (FAYVGGSVLGGLLAAWAGLAL). Residues Gly76 and Thr79 each contribute to the Na(+) site.

Belongs to the fluoride channel Fluc/FEX (TC 1.A.43) family.

It localises to the cell inner membrane. It catalyses the reaction fluoride(in) = fluoride(out). Its activity is regulated as follows. Na(+) is not transported, but it plays an essential structural role and its presence is essential for fluoride channel function. Functionally, fluoride-specific ion channel. Important for reducing fluoride concentration in the cell, thus reducing its toxicity. The chain is Fluoride-specific ion channel FluC from Stutzerimonas stutzeri (strain A1501) (Pseudomonas stutzeri).